A 626-amino-acid polypeptide reads, in one-letter code: Chaperone protein HtpG (626 aa).

The a; substrate-binding stretch occupies residues 1-341 (MRKKKFKAES…SEDLSLNISR (341 aa)). The tract at residues 342–552 (EMLQHDRQLK…DGEVTIEMEK (211 aa)) is b. A c region spans residues 553–626 (VLNAMPDSQQ…FTNDICKVMV (74 aa)).

It belongs to the heat shock protein 90 family. As to quaternary structure, homodimer.

It localises to the cytoplasm. Functionally, molecular chaperone. Has ATPase activity. In Bacillus velezensis (strain DSM 23117 / BGSC 10A6 / LMG 26770 / FZB42) (Bacillus amyloliquefaciens subsp. plantarum), this protein is Chaperone protein HtpG.